The sequence spans 791 residues: Protein Rf1, mitochondrial (791 aa).

The transit peptide at 1–27 (MARRAASRAVGALRSDGSIQGRGGRAG) directs the protein to the mitochondrion. Residues 1-31 (MARRAASRAVGALRSDGSIQGRGGRAGGSGA) are disordered. A compositionally biased stretch (gly residues) spans 20 to 30 (QGRGGRAGGSG). 19 PPR repeats span residues 86-120 (DLCTYGILIGCCCRAGRLDLGFAALGNVIKKGFRV), 121-156 (DAIAFTPLLKGLCADKRTSDAMDIVLRRMTELGCIP), 157-194 (NVFSYNILLKGLCDENRSQEALELLHMMADDRGGGSPP), 195-229 (DVVSYTTVINGFFKEGDSDKAYSTYHEMLDRGILP), 230-264 (DVVTYNSIIAALCKAQAMDKAMEVLNTMVKNGVMP), 265-299 (DCMTYNSILHGYCSSGQPKEAIGFLKKMRSDGVEP), 300-334 (DVVTYSLLMDYLCKNGRCMEARKIFDSMTKRGLKP), 335-369 (EITTYGTLLQGYATKGALVEMHGLLDLMVRNGIHP), 370-404 (DHYVFSILICAYAKQGKVDQAMLVFSKMRQQGLNP), 405-439 (NAVTYGAVIGILCKSGRVEDAMLYFEQMIDEGLSP), 440-474 (GNIVYNSLIHGLCTCNKWERAEELILEMLDRGICL), 475-509 (NTIFFNSIIDSHCKEGRVIESEKLFELMVRIGVKP), 510-544 (NVITYNTLINGYCLAGKMDEAMKLLSGMVSVGLKP), 545-579 (NTVTYSTLINGYCKISRMEDALVLFKEMESSGVSP), 580-614 (DIITYNIILQGLFQTRRTAAAKELYVRITESGTQI), 615-649 (ELSTYNIILHGLCKNKLTDDALQMFQNLCLMDLKL), 650-684 (EARTFNIMIDALLKVGRNDEAKDLFVAFSSNGLVP), 685-719 (NYWTYRLMAENIIGQGLLEELDQLFLSMEDNGCTV), and 720-754 (DSGMLNFIVRELLQRGEITRAGTYLSMIDEKHFSL).

The protein resides in the mitochondrion. Reduces the expression of the cytoplasmic male sterility (CMS)-associated mitochondrial gene ORF79, encoding a cytotoxic peptide. Can restore male fertility by blocking ORF79 production via endonucleolytic cleavage of dicistronic ATP6/ORF79 mRNA. Promotes the editing of ATP6 mRNAs independently of its cleavage function. This Oryza sativa subsp. indica (Rice) protein is Protein Rf1, mitochondrial (Rf1).